Consider the following 898-residue polypeptide: Phosphoenolpyruvate carboxylase (898 aa).

Residues His138 and Lys561 contribute to the active site.

This sequence belongs to the PEPCase type 1 family. The cofactor is Mg(2+).

The enzyme catalyses oxaloacetate + phosphate = phosphoenolpyruvate + hydrogencarbonate. In terms of biological role, forms oxaloacetate, a four-carbon dicarboxylic acid source for the tricarboxylic acid cycle. This Streptococcus pneumoniae serotype 4 (strain ATCC BAA-334 / TIGR4) protein is Phosphoenolpyruvate carboxylase.